Reading from the N-terminus, the 1109-residue chain is Zinc finger E-box-binding homeobox 1 (1109 aa).

Disordered regions lie at residues 1 to 106 and 123 to 143; these read MADG…DPNV and PEED…NGTP. The span at 15–30 shows a compositional bias: low complexity; sequence PRRNNVTNYNTVVEAN. A phosphoserine mark is found at Ser-31 and Ser-33. A compositionally biased stretch (acidic residues) spans 87 to 98; it reads VKDDECDSDAEN. Residues 150–173 form a C2H2-type 1 zinc finger; it reads LTCPYCDRGYKRFTSLKEHIKYRH. Residues Lys-166 and Lys-175 each participate in a glycyl lysine isopeptide (Lys-Gly) (interchain with G-Cter in SUMO2) cross-link. C2H2-type zinc fingers lie at residues 180-202 and 220-242; these read FSCS…MTSH and FKCT…LRIH. The C2H2-type 4; atypical zinc finger occupies 248–272; sequence YECPNCKKRFSHSGSYSSHISSKKC. The segment at 278–307 is disordered; it reads VNGRPRSGLKTSQCSSPSLSTSPGSPTRPQ. Lys-287 participates in a covalent cross-link: Glycyl lysine isopeptide (Lys-Gly) (interchain with G-Cter in SUMO2). Residues 288–304 are compositionally biased toward low complexity; the sequence is TSQCSSPSLSTSPGSPT. 2 positions are modified to phosphoserine: Ser-293 and Ser-302. Residues Lys-311 and Lys-315 each participate in a glycyl lysine isopeptide (Lys-Gly) (interchain with G-Cter in SUMO2) cross-link. Lys-327 is covalently cross-linked (Glycyl lysine isopeptide (Lys-Gly) (interchain with G-Cter in SUMO); alternate). Lys-327 participates in a covalent cross-link: Glycyl lysine isopeptide (Lys-Gly) (interchain with G-Cter in SUMO2); alternate. Residues Lys-419, Lys-473, Lys-484, Lys-495, and Lys-528 each participate in a glycyl lysine isopeptide (Lys-Gly) (interchain with G-Cter in SUMO2) cross-link. Disordered regions lie at residues 468–501, 525–566, and 614–711; these read VPQN…KDKS, PELK…SQPP, and QIPG…PQVE. Basic and acidic residues predominate over residues 483-501; that stretch reads CKSEKSPEDLTVKSEKDKS. Residues 559-618 constitute a DNA-binding region (homeobox; atypical); the sequence is DLSPSQPPLKNLLSLLKAYYALNAQPSTEELTKIADSVNLPLDVVKKWFEKMQAGQIPGQ. The span at 654 to 665 shows a compositional bias: polar residues; the sequence is RGQSPLKMTSSP. Phosphoserine occurs at positions 657, 664, 671, and 678. Positions 673 to 703 are enriched in polar residues; the sequence is INGSRSCTSSPSPLNLSSARNPQGYSCVSEG. A Phosphothreonine modification is found at Thr-680. The residue at position 682 (Ser-682) is a Phosphoserine. Lys-752 is covalently cross-linked (Glycyl lysine isopeptide (Lys-Gly) (interchain with G-Cter in SUMO); alternate). Lys-752 participates in a covalent cross-link: Glycyl lysine isopeptide (Lys-Gly) (interchain with G-Cter in SUMO2); alternate. The disordered stretch occupies residues 834-873; sequence PPVKVIQPNGNQDERQDTSSEGVSVEDQNDSDCTPPKKKT. C2H2-type zinc fingers lie at residues 881 to 903 and 909 to 931; these read YACD…KYEH and HECG…MRLH. A C2H2-type 7; atypical zinc finger spans residues 937 to 958; the sequence is YQCDKCGKRFSHSGSYSQHMNH. The interval 968-1109 is disordered; sequence EDRDAMEQED…RLSEEKTNEA (142 aa). The segment covering 1012 to 1066 has biased composition (acidic residues); sequence EEDEDSEKEEEEEDKEMEELQEDKECENPQEEEEEEEEEEEEEEEEEEEEAEEAE. The span at 1071–1087 shows a compositional bias: low complexity; the sequence is AAKTGGAVEEEAAQQAG. A compositionally biased stretch (basic and acidic residues) spans 1097-1109; sequence ESKRLSEEKTNEA.

Belongs to the delta-EF1/ZFH-1 C2H2-type zinc-finger family. In terms of assembly, interacts (via N-terminus) with SMARCA4/BRG1. Post-translationally, ubiquitinated, leading to degradation in a proteasome-dependent manner. Deubiquitinated by USP51, leading to stabilization.

It is found in the nucleus. In terms of biological role, acts as a transcriptional repressor. Binds to E-box sequences in the immunoglobulin heavy chain enhancer as well as in the regulatory regions of many other tissue-specific genes. Represses E-cadherin promoter and induces an epithelial-mesenchymal transition (EMT) by recruiting SMARCA4/BRG1. Represses BCL6 transcription in the presence of the corepressor CTBP1. Positively regulates neuronal differentiation. Represses RCOR1 transcription activation during neurogenesis. Represses transcription by binding to the E box (5'-CANNTG-3'). In the absence of TGFB1, acts as a repressor of COL1A2 transcription via binding to the E-box in the upstream enhancer region. In Rattus norvegicus (Rat), this protein is Zinc finger E-box-binding homeobox 1.